A 439-amino-acid polypeptide reads, in one-letter code: 3-phosphoshikimate 1-carboxyvinyltransferase (439 aa).

Residues Lys-29 and Arg-34 each coordinate 3-phosphoshikimate. A phosphoenolpyruvate-binding site is contributed by Lys-29. The phosphoenolpyruvate site is built by Gly-99 and Arg-128. Residues Ser-171, Ser-172, Gln-173, Ser-199, Asp-316, and Lys-343 each coordinate 3-phosphoshikimate. Gln-173 serves as a coordination point for phosphoenolpyruvate. Asp-316 (proton acceptor) is an active-site residue. The phosphoenolpyruvate site is built by Arg-347, Arg-390, and Lys-416.

This sequence belongs to the EPSP synthase family. Monomer.

It localises to the cytoplasm. The enzyme catalyses 3-phosphoshikimate + phosphoenolpyruvate = 5-O-(1-carboxyvinyl)-3-phosphoshikimate + phosphate. Its pathway is metabolic intermediate biosynthesis; chorismate biosynthesis; chorismate from D-erythrose 4-phosphate and phosphoenolpyruvate: step 6/7. Catalyzes the transfer of the enolpyruvyl moiety of phosphoenolpyruvate (PEP) to the 5-hydroxyl of shikimate-3-phosphate (S3P) to produce enolpyruvyl shikimate-3-phosphate and inorganic phosphate. This chain is 3-phosphoshikimate 1-carboxyvinyltransferase, found in Deinococcus radiodurans (strain ATCC 13939 / DSM 20539 / JCM 16871 / CCUG 27074 / LMG 4051 / NBRC 15346 / NCIMB 9279 / VKM B-1422 / R1).